The sequence spans 690 residues: MAKDFLLEIGTEEIPAKFAPGVLNQLREQAQKYCQELRLDYQDLKVYTTPRRFAVLIQGLAEKQTDFTAEVKGPAVKAAYDAEGNPTKAAQGFARGQGVEPKDLFVQELNGVSYVYARKFELGQPTLQLLPKLCTDLITGLHFPKPMRWADLEFRFARPIRWIVALFGSEVIPFEFVGLASGKASRGHRTLGGPVTLDSPADYEKQMLQAFVMVDPEQRRQSVWEQIHALAAKVGGDVEKDDDLLDEVTHIIEYPTALLGEVAPNYMHLPEPVITTPMKEHQRYFPVRDKEGKLLPYFITVRNGDDYALAKVKAGNEKVLKARLEDAAFYYREDQKTPLAELVEKLDKVTYHEKLGSVRQRVERIRTLARGIAARLGMESEKQDLVERTALLAKADLVTLMVYDFPELQGIMGADYARMVGEKPEVCTGILEHYQPRFAGDELPQSYTGQIVSVADKLDAIVGAFGIGIQPTGSQDPYALRRQAQGVVGIILEAGWDISLEQLIAASYVNFAEQGISLLPLADLQSALQDFFQQRLRFVLQEQGARYDTLDAVLAQGSNQITRAARKAQVLAAKRETTEFVPYSQAYIRCLNLSKKAQTQPLDPKNLIDPTEIALAAALVQRQEAFAALIEKGDYAEAYALASELIPMIEALFNAVMIMVEDEILKQARLALLGECVAILGCLGDLSLLA.

The protein belongs to the class-II aminoacyl-tRNA synthetase family. In terms of assembly, tetramer of two alpha and two beta subunits.

It is found in the cytoplasm. The catalysed reaction is tRNA(Gly) + glycine + ATP = glycyl-tRNA(Gly) + AMP + diphosphate. The sequence is that of Glycine--tRNA ligase beta subunit from Desulfitobacterium hafniense (strain DSM 10664 / DCB-2).